Reading from the N-terminus, the 152-residue chain is Orientotoxin-1 (152 aa).

Expressed by the venom gland.

The protein localises to the secreted. It carries out the reaction a 1-acyl-sn-glycero-3-phosphocholine + H2O = sn-glycerol 3-phosphocholine + a fatty acid + H(+). Functionally, neurotoxin of presynaptic effect which degrades lysophospholipids. The chain is Orientotoxin-1 from Vespa orientalis (Oriental hornet).